The primary structure comprises 717 residues: Scinderin (717 aa).

The tract at residues 1–363 (MAPERHPPAF…DGFGKVYVTE (363 aa)) is actin-severing. The stretch at 28 to 108 (ELVPVPPSRH…IQGYESNEFV (81 aa)) is one Gelsolin-like 1 repeat. A 1,2-diacyl-sn-glycero-3-phospho-(1D-myo-inositol-4,5-bisphosphate) contacts are provided by residues 112–119 (KGGIKYKA) and 138–146 (RLLHIKGRR). Gelsolin-like repeat units lie at residues 148–220 (VRAT…PDEL), 265–340 (VVAE…TPIF), 408–483 (RVPV…PHLL), 526–590 (AEVD…EEFW), and 628–703 (IEEV…PPTF). The ca(2+)-dependent actin binding stretch occupies residues 364-715 (RVAKIEQIEF…WFLAWDSNKW (352 aa)). Residues Asn-538, Asp-539, Glu-562, Asp-643, Asp-644, and Glu-666 each contribute to the Ca(2+) site.

The protein belongs to the villin/gelsolin family.

It localises to the cytoplasm. The protein resides in the cytoskeleton. The protein localises to the cell projection. It is found in the podosome. Ca(2+)-dependent actin filament-severing protein that has a regulatory function in exocytosis by affecting the organization of the microfilament network underneath the plasma membrane. In vitro, also has barbed end capping and nucleating activities in the presence of Ca(2+). Severing activity is inhibited by phosphatidylinositol 4,5-bis-phosphate (PIP2). Required for megakaryocyte differentiation, maturation, polyploidization and apoptosis with the release of platelet-like particles. Plays a role in osteoclastogenesis (OCG) and actin cytoskeletal organization in osteoclasts. Regulates chondrocyte proliferation and differentiation. Inhibits cell proliferation and tumorigenesis. Signaling is mediated by MAPK, p38 and JNK pathways. This is Scinderin (SCIN) from Gallus gallus (Chicken).